Consider the following 545-residue polypeptide: CTP synthase (545 aa).

The tract at residues 1-266 is amidoligase domain; that stretch reads MTTNYIFVTG…DDYICKRFSL (266 aa). Residue Ser-14 coordinates CTP. Ser-14 contributes to the UTP binding site. ATP is bound by residues 15–20 and Asp-72; that span reads SLGKGI. Mg(2+) is bound by residues Asp-72 and Glu-140. CTP is bound by residues 147 to 149, 187 to 192, and Lys-223; these read DIE and KTKPTQ. UTP is bound by residues 187 to 192 and Lys-223; that span reads KTKPTQ. Residue 239-241 coordinates ATP; sequence KDI. Residues 291–542 enclose the Glutamine amidotransferase type-1 domain; that stretch reads TIGMVGKYVA…VKAAGAYQKR (252 aa). Gly-352 serves as a coordination point for L-glutamine. Cys-379 functions as the Nucleophile; for glutamine hydrolysis in the catalytic mechanism. Residues 380–383, Glu-403, and Arg-470 contribute to the L-glutamine site; that span reads LGMQ. Residues His-515 and Glu-517 contribute to the active site.

It belongs to the CTP synthase family. In terms of assembly, homotetramer.

It carries out the reaction UTP + L-glutamine + ATP + H2O = CTP + L-glutamate + ADP + phosphate + 2 H(+). The enzyme catalyses L-glutamine + H2O = L-glutamate + NH4(+). It catalyses the reaction UTP + NH4(+) + ATP = CTP + ADP + phosphate + 2 H(+). It participates in pyrimidine metabolism; CTP biosynthesis via de novo pathway; CTP from UDP: step 2/2. Its activity is regulated as follows. Allosterically activated by GTP, when glutamine is the substrate; GTP has no effect on the reaction when ammonia is the substrate. The allosteric effector GTP functions by stabilizing the protein conformation that binds the tetrahedral intermediate(s) formed during glutamine hydrolysis. Inhibited by the product CTP, via allosteric rather than competitive inhibition. Catalyzes the ATP-dependent amination of UTP to CTP with either L-glutamine or ammonia as the source of nitrogen. Regulates intracellular CTP levels through interactions with the four ribonucleotide triphosphates. The sequence is that of CTP synthase from Pectobacterium atrosepticum (strain SCRI 1043 / ATCC BAA-672) (Erwinia carotovora subsp. atroseptica).